Consider the following 390-residue polypeptide: Flap endonuclease 1-2 (390 aa).

The N-domain stretch occupies residues M1–K108. Residue D34 participates in Mg(2+) binding. Residue R74 participates in DNA binding. D90, E162, E164, D183, and D185 together coordinate Mg(2+). Residues Q126–Y254 are I-domain. Residue E162 coordinates DNA. The DNA site is built by G232 and D234. D234 lines the Mg(2+) pocket. The tract at residues F348–F356 is interaction with PCNA. Positions T359–I390 are disordered.

Belongs to the XPG/RAD2 endonuclease family. FEN1 subfamily. In terms of assembly, interacts with PCNA. Three molecules of FEN1 bind to one PCNA trimer with each molecule binding to one PCNA monomer. PCNA stimulates the nuclease activity without altering cleavage specificity. The cofactor is Mg(2+). In terms of processing, phosphorylated. Phosphorylation upon DNA damage induces relocalization to the nuclear plasma.

It is found in the nucleus. Its subcellular location is the nucleolus. The protein resides in the nucleoplasm. The protein localises to the mitochondrion. In terms of biological role, structure-specific nuclease with 5'-flap endonuclease and 5'-3' exonuclease activities involved in DNA replication and repair. During DNA replication, cleaves the 5'-overhanging flap structure that is generated by displacement synthesis when DNA polymerase encounters the 5'-end of a downstream Okazaki fragment. It enters the flap from the 5'-end and then tracks to cleave the flap base, leaving a nick for ligation. Also involved in the long patch base excision repair (LP-BER) pathway, by cleaving within the apurinic/apyrimidinic (AP) site-terminated flap. Acts as a genome stabilization factor that prevents flaps from equilibrating into structures that lead to duplications and deletions. Also possesses 5'-3' exonuclease activity on nicked or gapped double-stranded DNA, and exhibits RNase H activity. Also involved in replication and repair of rDNA and in repairing mitochondrial DNA. The protein is Flap endonuclease 1-2 of Paramecium tetraurelia.